Consider the following 248-residue polypeptide: Phosphomannomutase (248 aa).

Residue aspartate 14 is the Nucleophile of the active site. Mg(2+) is bound by residues aspartate 14 and aspartate 16. Residue aspartate 16 is the Proton donor/acceptor of the active site. The alpha-D-mannose 1-phosphate site is built by arginine 23, arginine 125, arginine 136, arginine 143, serine 181, and aspartate 183. 3 residues coordinate Mg(2+): aspartate 209, phenylalanine 221, and threonine 226.

Belongs to the eukaryotic PMM family. As to quaternary structure, homodimer. It depends on Mg(2+) as a cofactor.

The protein resides in the cytoplasm. It carries out the reaction alpha-D-mannose 1-phosphate = D-mannose 6-phosphate. Its pathway is nucleotide-sugar biosynthesis; GDP-alpha-D-mannose biosynthesis; alpha-D-mannose 1-phosphate from D-fructose 6-phosphate: step 2/2. Catalyzes the interconversion of mannose-6-phosphate to mannose-1-phosphate, the precursor for the synthesis of GDP-mannose. GDP-mannose is an essential sugar nucleotide for the synthesis of D-mannose-containing cell wall polysaccharides (galactomannans and glucomannans), glycolipids, glycoproteins and the antioxidant L-ascorbate. This Oryza sativa subsp. indica (Rice) protein is Phosphomannomutase.